A 33-amino-acid polypeptide reads, in one-letter code: uncharacterized protein (33 aa).

Residues 1 to 33 (MQPGTGLSFDISQILKQGSDPKQKLPERQAIVL) are disordered.

This is an uncharacterized protein from Caenorhabditis elegans.